The sequence spans 253 residues: Vitamin B12 import ATP-binding protein BtuD (253 aa).

In terms of domain architecture, ABC transporter spans 4 to 236; that stretch reads LQLSNVSVDT…NILSEVFEVD (233 aa). ATP is bound at residue 32–39; the sequence is GPNGAGKS.

Belongs to the ABC transporter superfamily. Vitamin B12 importer (TC 3.A.1.13.1) family. As to quaternary structure, the complex is composed of two ATP-binding proteins (BtuD), two transmembrane proteins (BtuC) and a solute-binding protein (BtuF).

The protein localises to the cell inner membrane. It carries out the reaction an R-cob(III)alamin(out) + ATP + H2O = an R-cob(III)alamin(in) + ADP + phosphate + H(+). In terms of biological role, part of the ABC transporter complex BtuCDF involved in vitamin B12 import. Responsible for energy coupling to the transport system. The protein is Vitamin B12 import ATP-binding protein BtuD of Yersinia enterocolitica serotype O:8 / biotype 1B (strain NCTC 13174 / 8081).